Here is a 167-residue protein sequence, read N- to C-terminus: NADH-quinone oxidoreductase subunit B (167 aa).

[4Fe-4S] cluster-binding residues include Cys48, Cys49, Cys113, and Cys143.

The protein belongs to the complex I 20 kDa subunit family. NDH-1 is composed of 14 different subunits. Subunits NuoB, C, D, E, F, and G constitute the peripheral sector of the complex. Requires [4Fe-4S] cluster as cofactor.

The protein localises to the cell membrane. The enzyme catalyses a quinone + NADH + 5 H(+)(in) = a quinol + NAD(+) + 4 H(+)(out). In terms of biological role, NDH-1 shuttles electrons from NADH, via FMN and iron-sulfur (Fe-S) centers, to quinones in the respiratory chain. Couples the redox reaction to proton translocation (for every two electrons transferred, four hydrogen ions are translocated across the cytoplasmic membrane), and thus conserves the redox energy in a proton gradient. The chain is NADH-quinone oxidoreductase subunit B from Wolbachia pipientis subsp. Culex pipiens (strain wPip).